A 446-amino-acid polypeptide reads, in one-letter code: Deoxyguanosinetriphosphate triphosphohydrolase-like protein (446 aa).

The interval 1–28 is disordered; that stretch reads MSSSVWQERRHGEDKQRRNDHRSPFQRD. Basic and acidic residues predominate over residues 7–28; that stretch reads QERRHGEDKQRRNDHRSPFQRD. One can recognise an HD domain in the interval 59-252; that stretch reads RLTHSLEVSQ…MELADDIAYA (194 aa).

Belongs to the dGTPase family. Type 2 subfamily.

The polypeptide is Deoxyguanosinetriphosphate triphosphohydrolase-like protein (Shewanella sp. (strain MR-7)).